Reading from the N-terminus, the 1299-residue chain is MAANRHGGHLPLPEGLAAPTHRTVIYYAKCDFSPSEERCVNRFTGRPGPLTLMRDRSNVEHMVLITVKTDEEDRNTAEQNQARARSRSQETKKILTLLAPQIDYNPLTLDSLDHNLGQRAVIFSYGPNLHQRLTTSALELQRACKTLKLHSILRIESGRHFTSKAVQYVVENEDDILTAALIGENNLYQINTETLSATRLVTDALSWAEYKPLDVTCNAVMKPPREGVQPMCLVASSPVSDYNFNKYLMITPSCTAISLHMGHPYPRVSQGIFHVHSSTRTMGRQCCDYLFHSSLLPNGNTTAFACGYYVTSTTGSGSIPTSVNEQILHAASAQGRSLNNLGVPVVSGFLKPLPRCSEVPNNVITHVSQLRTASERDLNLCRVRAGQFVAAVGAYDPTSGPDKSPYLYRDSIDSLNRAIQATKLFYQMCETPCVSSYQREFGSCSTLHHLLALVSPKGMTVHISRLPEEITKALRSVPVLEEDTVCAFVSGYFFNCFSSQLFLVIDDKVKTTPSGQIHFTDILKKAGNLCGAPVYILGRTCNDIGIHCVNDLYHPRDLSVLDSQATSSMTLTVQPHASVVSATLQPQEPHEEDESIDWAMFGTSSTISNILSHPAVASKSNIIRRLDRCGNGLIAQQPGIGPSDAPVSDYAIICDSSMFPARLENDAQSIKKISKQEAQRAYAQIHKWFGTEKLFLNTISAKVIALGEQAYKLSRNPIVGVKYAIAEAITNIMFGPDCVLEDITLTVAAHWNKQETAALYRVLFACKEMCRELNVNLSITDASDSRDTPIQDTDAANTVVVTASARVTSIERITPALKKAENALVHVCLSKELTLSGSVFENSFTAFSSHLPDLDTSKLRDMFYAVKHLISKNLVVAGHDISDGGLITTAAEMCFASTFGVTVNLPSALPALMYLVSETPGALLEVPKEHLSTVTTLLSERGLTWYAVGTVNNVKNLSIYDNGTHLLTESINILNSKWMSYAEESFETCEPHIESMYRNDYGNNAMDLKHLEDLCTHKPLQLYTCPSHPVSVAVLTFPGCPDPVATLQAFANVGFLSYPISTEFLLQGNNLNAFSCLAVSGSSAFEEEGTGTRIAIYTLLQCDLAKNCLKEFFQRPDTLSLCCGELGTQLLAACQVVGDTHPSRGDISSNPESWTLELEPNASKHYESLWLNFHVPQTTKSIILQALRGTIFQDGLWQVLGLRYKHDAQEYIMQQNGTIAMSYHSAKINPYLYAMHYPRNPSGNSSVAGICSKNGRHLALLVEPALSFHTWQWQHIPKPLVTSPWALMYQCMFLWCVKE.

The protein localises to the virion tegument. The polypeptide is Probable membrane antigen 75 (75) (Saimiriine herpesvirus 2 (strain 11) (SaHV-2)).